Consider the following 280-residue polypeptide: 2,3,4,5-tetrahydropyridine-2,6-dicarboxylate N-succinyltransferase (280 aa).

Residues Arg-109 and Asp-146 each coordinate substrate.

Belongs to the transferase hexapeptide repeat family. Homotrimer.

It is found in the cytoplasm. It carries out the reaction (S)-2,3,4,5-tetrahydrodipicolinate + succinyl-CoA + H2O = (S)-2-succinylamino-6-oxoheptanedioate + CoA. Its pathway is amino-acid biosynthesis; L-lysine biosynthesis via DAP pathway; LL-2,6-diaminopimelate from (S)-tetrahydrodipicolinate (succinylase route): step 1/3. The polypeptide is 2,3,4,5-tetrahydropyridine-2,6-dicarboxylate N-succinyltransferase (Blochmanniella floridana).